A 243-amino-acid chain; its full sequence is Hydroxyacylglutathione hydrolase (243 aa).

Zn(2+) is bound by residues histidine 59, histidine 61, aspartate 63, histidine 64, histidine 117, aspartate 135, and histidine 173.

Belongs to the metallo-beta-lactamase superfamily. Glyoxalase II family. In terms of assembly, monomer. Zn(2+) is required as a cofactor.

It carries out the reaction an S-(2-hydroxyacyl)glutathione + H2O = a 2-hydroxy carboxylate + glutathione + H(+). It functions in the pathway secondary metabolite metabolism; methylglyoxal degradation; (R)-lactate from methylglyoxal: step 2/2. In terms of biological role, thiolesterase that catalyzes the hydrolysis of S-D-lactoyl-glutathione to form glutathione and D-lactic acid. The chain is Hydroxyacylglutathione hydrolase from Acidiphilium cryptum (strain JF-5).